Here is a 92-residue protein sequence, read N- to C-terminus: Small ribosomal subunit protein uS19 (92 aa).

It belongs to the universal ribosomal protein uS19 family.

Its function is as follows. Protein S19 forms a complex with S13 that binds strongly to the 16S ribosomal RNA. The sequence is that of Small ribosomal subunit protein uS19 from Methylocella silvestris (strain DSM 15510 / CIP 108128 / LMG 27833 / NCIMB 13906 / BL2).